The following is a 162-amino-acid chain: ATP synthase subunit b (162 aa).

A helical membrane pass occupies residues L10 to Y29.

It belongs to the ATPase B chain family. F-type ATPases have 2 components, F(1) - the catalytic core - and F(0) - the membrane proton channel. F(1) has five subunits: alpha(3), beta(3), gamma(1), delta(1), epsilon(1). F(0) has three main subunits: a(1), b(2) and c(10-14). The alpha and beta chains form an alternating ring which encloses part of the gamma chain. F(1) is attached to F(0) by a central stalk formed by the gamma and epsilon chains, while a peripheral stalk is formed by the delta and b chains.

The protein localises to the cell membrane. Its function is as follows. F(1)F(0) ATP synthase produces ATP from ADP in the presence of a proton or sodium gradient. F-type ATPases consist of two structural domains, F(1) containing the extramembraneous catalytic core and F(0) containing the membrane proton channel, linked together by a central stalk and a peripheral stalk. During catalysis, ATP synthesis in the catalytic domain of F(1) is coupled via a rotary mechanism of the central stalk subunits to proton translocation. Functionally, component of the F(0) channel, it forms part of the peripheral stalk, linking F(1) to F(0). This Symbiobacterium thermophilum (strain DSM 24528 / JCM 14929 / IAM 14863 / T) protein is ATP synthase subunit b.